We begin with the raw amino-acid sequence, 111 residues long: Class I hydrophobin SC4 (111 aa).

Residues 1 to 25 (MRFSLALLALPALAAAAPVPGGGKG) form the signal peptide. 4 disulfide bridges follow: cysteine 30–cysteine 37, cysteine 38–cysteine 72, cysteine 86–cysteine 92, and cysteine 93–cysteine 106. Asparagine 39 carries N-linked (GlcNAc...) asparagine glycosylation.

This sequence belongs to the fungal hydrophobin family. As to quaternary structure, self-assembles to form functional amyloid fibrils called rodlets. Self-assembly into fibrillar rodlets occurs spontaneously at hydrophobic:hydrophilic interfaces and the rodlets further associate laterally to form amphipathic monolayers.

The protein localises to the secreted. It is found in the cell wall. Its function is as follows. Aerial growth, conidiation, and dispersal of filamentous fungi in the environment rely upon a capability of their secreting small amphipathic proteins called hydrophobins (HPBs) with low sequence identity. Class I can self-assemble into an outermost layer of rodlet bundles on aerial cell surfaces, conferring cellular hydrophobicity that supports fungal growth, development and dispersal; whereas Class II form highly ordered films at water-air interfaces through intermolecular interactions but contribute nothing to the rodlet structure. SC4 is a dikaryon-specific class I hydrophobin that contributes to the formation of aerial hyphae and fruiting bodies. Plays a role within fruiting bodies by preventing gas channels filling with water under wet conditions, probably serving uninterrupted gas exchange. SC4 cannot fully substitute for SC3. Involved in the unusual characteristic of mounds to adhere to and completely envelop adjacent fruiting bodies on mosaic colonies. In Schizophyllum commune (Split gill fungus), this protein is Class I hydrophobin SC4.